The chain runs to 399 residues: Dual-specificity RNA methyltransferase RlmN (399 aa).

The Proton acceptor role is filled by Glu116. A Radical SAM core domain is found at 122 to 352; that stretch reads SEDRLTLCIS…VLLRRSMGRD (231 aa). A disulfide bridge links Cys129 with Cys357. 3 residues coordinate [4Fe-4S] cluster: Cys136, Cys140, and Cys143. Residues 185 to 186, Ser217, 238 to 240, and Asn314 contribute to the S-adenosyl-L-methionine site; these read GE and SLN. The active-site S-methylcysteine intermediate is Cys357.

It belongs to the radical SAM superfamily. RlmN family. It depends on [4Fe-4S] cluster as a cofactor.

It localises to the cytoplasm. It carries out the reaction adenosine(2503) in 23S rRNA + 2 reduced [2Fe-2S]-[ferredoxin] + 2 S-adenosyl-L-methionine = 2-methyladenosine(2503) in 23S rRNA + 5'-deoxyadenosine + L-methionine + 2 oxidized [2Fe-2S]-[ferredoxin] + S-adenosyl-L-homocysteine. The catalysed reaction is adenosine(37) in tRNA + 2 reduced [2Fe-2S]-[ferredoxin] + 2 S-adenosyl-L-methionine = 2-methyladenosine(37) in tRNA + 5'-deoxyadenosine + L-methionine + 2 oxidized [2Fe-2S]-[ferredoxin] + S-adenosyl-L-homocysteine. Functionally, specifically methylates position 2 of adenine 2503 in 23S rRNA and position 2 of adenine 37 in tRNAs. m2A2503 modification seems to play a crucial role in the proofreading step occurring at the peptidyl transferase center and thus would serve to optimize ribosomal fidelity. The chain is Dual-specificity RNA methyltransferase RlmN from Bdellovibrio bacteriovorus (strain ATCC 15356 / DSM 50701 / NCIMB 9529 / HD100).